The following is a 193-amino-acid chain: Acyl carrier protein phosphodiesterase (193 aa).

It belongs to the AcpH family.

It catalyses the reaction holo-[ACP] + H2O = apo-[ACP] + (R)-4'-phosphopantetheine + H(+). Its function is as follows. Converts holo-ACP to apo-ACP by hydrolytic cleavage of the phosphopantetheine prosthetic group from ACP. This Klebsiella pneumoniae subsp. pneumoniae (strain ATCC 700721 / MGH 78578) protein is Acyl carrier protein phosphodiesterase.